Consider the following 340-residue polypeptide: DnaJ homolog subfamily B member 1 (340 aa).

The 69-residue stretch at 2–70 (GKDYYQTLGL…REIFDRYGEE (69 aa)) folds into the J domain. Thr307 carries the phosphothreonine modification.

Interacts with DNAJC3. Interacts with HSF1 (via transactivation domain); this interaction results in the inhibition of heat shock- and HSF1-induced transcriptional activity during the attenuation and recovery phase period of the heat shock response. Interacts with BAG3.

Its subcellular location is the cytoplasm. It is found in the nucleus. It localises to the nucleolus. Functionally, interacts with HSP70 and can stimulate its ATPase activity. Stimulates the association between HSC70 and HIP. Negatively regulates heat shock-induced HSF1 transcriptional activity during the attenuation and recovery phase period of the heat shock response. Stimulates ATP hydrolysis and the folding of unfolded proteins mediated by HSPA1A/B (in vitro). This is DnaJ homolog subfamily B member 1 (DNAJB1) from Homo sapiens (Human).